We begin with the raw amino-acid sequence, 209 residues long: Probable nicotinate-nucleotide adenylyltransferase (209 aa).

Belongs to the NadD family.

The enzyme catalyses nicotinate beta-D-ribonucleotide + ATP + H(+) = deamido-NAD(+) + diphosphate. Its pathway is cofactor biosynthesis; NAD(+) biosynthesis; deamido-NAD(+) from nicotinate D-ribonucleotide: step 1/1. In terms of biological role, catalyzes the reversible adenylation of nicotinate mononucleotide (NaMN) to nicotinic acid adenine dinucleotide (NaAD). In Hydrogenovibrio crunogenus (strain DSM 25203 / XCL-2) (Thiomicrospira crunogena), this protein is Probable nicotinate-nucleotide adenylyltransferase.